Here is a 563-residue protein sequence, read N- to C-terminus: Putative ABC transporter ATP-binding protein SCO2324 (563 aa).

The ABC transporter 1 domain occupies 2 to 243 (IRFEDVSVTY…SPVYPPVVGL (242 aa)). 36–43 (GPSGVGKS) is an ATP binding site. The interval 271–317 (AGREIPDHTPPPSAPLPAPPAPRPVTSRWRRRGKRPENPSAPTPYAA) is disordered. Residues 278-293 (HTPPPSAPLPAPPAPR) show a composition bias toward pro residues. One can recognise an ABC transporter 2 domain in the interval 317-545 (AEVRSLAVRR…SPSYAPQVAK (229 aa)). Position 349–356 (349–356 (GRNGAGKS)) interacts with ATP.

The protein belongs to the ABC transporter superfamily.

Its subcellular location is the cell membrane. Its function is as follows. Probably part of an ABC transporter complex. Responsible for energy coupling to the transport system. The protein is Putative ABC transporter ATP-binding protein SCO2324 of Streptomyces coelicolor (strain ATCC BAA-471 / A3(2) / M145).